Here is a 20-residue protein sequence, read N- to C-terminus: Juvenile hormone-binding protein (20 aa).

It localises to the secreted. Prevents juvenile hormone from being hydrolyzed by general esterases by combining with it specifically. This Bombyx mori (Silk moth) protein is Juvenile hormone-binding protein (JHBP).